A 456-amino-acid chain; its full sequence is Cyclic AMP-responsive element-binding protein 3-like protein 3 (456 aa).

2 disordered regions span residues methionine 1–isoleucine 20 and glycine 47–cysteine 120. Topologically, residues methionine 1–threonine 317 are cytoplasmic. Polar residues predominate over residues aspartate 71–glycine 85. The bZIP domain maps to methionine 238–leucine 301. The basic motif stretch occupies residues lysine 240–arginine 269. The segment at leucine 280–leucine 301 is leucine-zipper. A Glycyl lysine isopeptide (Lys-Gly) (interchain with G-Cter in ubiquitin) cross-link involves residue lysine 289. Residues cysteine 318–alanine 338 form a helical; Signal-anchor for type II membrane protein membrane-spanning segment. Over serine 339–leucine 456 the chain is Lumenal. Disordered regions lie at residues arginine 365–serine 423 and cysteine 435–leucine 456. Asparagine 408 and asparagine 415 each carry an N-linked (GlcNAc...) asparagine glycan.

Belongs to the bZIP family. ATF subfamily. Binds DNA as a dimer. May form homodimers. Interacts with ATF6. Interacts with SYNV1/HRD1; this interaction leads to CREB3L3 ubiquitination and proteasomal degradation. Controlled by regulated intramembrane proteolysis (RIP). Following ER stress a fragment containing the cytoplasmic transcription factor domain is released by proteolysis. The cleavage seems to be performed sequentially by site-1 and site-2 proteases (PS1 and PS2). Post-translationally, N-glycosylation is required for optimal proteolytic activation. In terms of processing, ubiquitinated at Lys-289 by SYNV1/HRD1 via 'Lys-27'-linked ubiquitin.

It localises to the endoplasmic reticulum membrane. Its subcellular location is the nucleus. Functionally, transcription factor that may act during endoplasmic reticulum stress by activating unfolded protein response target genes. Activated in response to cAMP stimulation. In vitro, binds the cAMP response element (CRE). Activates transcription through box-B element and CRE. Seems to function synergistically with ATF6. In acute inflammatory response, may activate expression of acute phase response (APR) genes. May be involved in growth suppression. Regulates FGF21 transcription. Plays a crucial role in the regulation of triglyceride metabolism and is required for the maintenance of normal plasma triglyceride concentrations. The sequence is that of Cyclic AMP-responsive element-binding protein 3-like protein 3 (CREB3L3) from Bos taurus (Bovine).